The primary structure comprises 376 residues: Chorismate synthase (376 aa).

2 residues coordinate NADP(+): arginine 39 and arginine 45. Residues 115–117 (RSS), glycine 276, 291–295 (KPIPT), and arginine 317 each bind FMN.

This sequence belongs to the chorismate synthase family. As to quaternary structure, homotetramer. FMNH2 is required as a cofactor.

It catalyses the reaction 5-O-(1-carboxyvinyl)-3-phosphoshikimate = chorismate + phosphate. It functions in the pathway metabolic intermediate biosynthesis; chorismate biosynthesis; chorismate from D-erythrose 4-phosphate and phosphoenolpyruvate: step 7/7. Functionally, catalyzes the anti-1,4-elimination of the C-3 phosphate and the C-6 proR hydrogen from 5-enolpyruvylshikimate-3-phosphate (EPSP) to yield chorismate, which is the branch point compound that serves as the starting substrate for the three terminal pathways of aromatic amino acid biosynthesis. This reaction introduces a second double bond into the aromatic ring system. This is Chorismate synthase from Thermotoga maritima (strain ATCC 43589 / DSM 3109 / JCM 10099 / NBRC 100826 / MSB8).